A 290-amino-acid chain; its full sequence is Probable protein phosphatase 2C 20 (290 aa).

The region spanning 31-278 (AHGYDFVKGK…DDISCIVPCF (248 aa)) is the PPM-type phosphatase domain. Residues Asp68, Gly69, Asp230, and Asp269 each coordinate Mn(2+).

This sequence belongs to the PP2C family. The cofactor is Mg(2+). Mn(2+) is required as a cofactor.

The enzyme catalyses O-phospho-L-seryl-[protein] + H2O = L-seryl-[protein] + phosphate. The catalysed reaction is O-phospho-L-threonyl-[protein] + H2O = L-threonyl-[protein] + phosphate. In terms of biological role, may be involved in defense signaling. The protein is Probable protein phosphatase 2C 20 (PPC3-1.2) of Arabidopsis thaliana (Mouse-ear cress).